A 156-amino-acid polypeptide reads, in one-letter code: Small ribosomal subunit protein uS7 (156 aa).

The protein belongs to the universal ribosomal protein uS7 family. In terms of assembly, part of the 30S ribosomal subunit. Contacts proteins S9 and S11.

Functionally, one of the primary rRNA binding proteins, it binds directly to 16S rRNA where it nucleates assembly of the head domain of the 30S subunit. Is located at the subunit interface close to the decoding center, probably blocks exit of the E-site tRNA. The protein is Small ribosomal subunit protein uS7 of Methylorubrum extorquens (strain CM4 / NCIMB 13688) (Methylobacterium extorquens).